The chain runs to 135 residues: Large ribosomal subunit protein uL16 (135 aa).

This sequence belongs to the universal ribosomal protein uL16 family. In terms of assembly, part of the 50S ribosomal subunit.

Its function is as follows. Binds 23S rRNA and is also seen to make contacts with the A and possibly P site tRNAs. The polypeptide is Large ribosomal subunit protein uL16 (Desulforapulum autotrophicum (strain ATCC 43914 / DSM 3382 / VKM B-1955 / HRM2) (Desulfobacterium autotrophicum)).